Reading from the N-terminus, the 329-residue chain is Sex comb on midleg-like protein 1 (329 aa).

2 positions are modified to phosphoserine: Ser138 and Ser238. The interval 138 to 157 (SPTLPVSRRENNSPSNLPRP) is disordered. An SAM domain is found at 258–325 (WSVEAVVLFL…YYIDRLKQGK (68 aa)).

Belongs to the SCM family.

It localises to the nucleus. In terms of biological role, putative Polycomb group (PcG) protein. PcG proteins act by forming multiprotein complexes, which are required to maintain the transcriptionally repressive state of homeotic genes throughout development. May be involved in spermatogenesis during sexual maturation. The chain is Sex comb on midleg-like protein 1 (SCML1) from Pan troglodytes (Chimpanzee).